A 400-amino-acid polypeptide reads, in one-letter code: NADH-quinone oxidoreductase subunit D (400 aa).

It belongs to the complex I 49 kDa subunit family. As to quaternary structure, NDH-1 is composed of 14 different subunits. Subunits NuoB, C, D, E, F, and G constitute the peripheral sector of the complex.

The protein localises to the cell inner membrane. The enzyme catalyses a quinone + NADH + 5 H(+)(in) = a quinol + NAD(+) + 4 H(+)(out). NDH-1 shuttles electrons from NADH, via FMN and iron-sulfur (Fe-S) centers, to quinones in the respiratory chain. The immediate electron acceptor for the enzyme in this species is believed to be a menaquinone. Couples the redox reaction to proton translocation (for every two electrons transferred, four hydrogen ions are translocated across the cytoplasmic membrane), and thus conserves the redox energy in a proton gradient. The chain is NADH-quinone oxidoreductase subunit D from Chlorobium phaeobacteroides (strain DSM 266 / SMG 266 / 2430).